The following is a 432-amino-acid chain: Bouquet formation protein 4 (432 aa).

Positions 1–21 (MTENEKSRSLPAERNPLYKDD) are disordered. One can recognise an HTH APSES-type domain in the interval 38–147 (EFPDGPATFV…SSTPSTYATP (110 aa)). Residues 73–94 (ATSMFRSAFPKATQEEEDLEMR) constitute a DNA-binding region (H-T-H motif). Low complexity-rich tracts occupy residues 139–152 (STPSTYATPSRPTA) and 163–172 (ESSTSATTTS). Disordered stretches follow at residues 139–283 (STPS…GKIR) and 364–384 (KSSIRSSPKSKKRSREDFEEN). Basic and acidic residues predominate over residues 180–228 (RLAEHLENSKKTILQHDNKEEDKEIHSEENETKDEIKSEKKEPEIKKQE). Positions 229-241 (GGSSTEKVGQPSS) are enriched in polar residues.

In terms of assembly, interacts with rap1.

It localises to the cytoplasm. The protein resides in the nucleus. Its subcellular location is the nucleus inner membrane. In terms of biological role, connects telomeres to the nuclear envelop (NE) during both vegetative growth and meiosis. This connection ensures clustering of telomeres to the spindle pole body (SPB) when cells enter meiotic prophase. The chain is Bouquet formation protein 4 (bqt4) from Schizosaccharomyces pombe (strain 972 / ATCC 24843) (Fission yeast).